The sequence spans 482 residues: tRNA sulfurtransferase (482 aa).

The region spanning 61–165 is the THUMP domain; it reads KETLEVLTQT…NDKLNQVIER (105 aa). Residues 183–184, Lys265, Gly287, and Gln296 each bind ATP; that span reads LI. Cys344 and Cys456 form a disulfide bridge. The Rhodanese domain occupies 404–482; the sequence is VAEHAVVLDI…GFHNVKVYRP (79 aa). Cys456 functions as the Cysteine persulfide intermediate in the catalytic mechanism.

This sequence belongs to the ThiI family.

Its subcellular location is the cytoplasm. The enzyme catalyses [ThiI sulfur-carrier protein]-S-sulfanyl-L-cysteine + a uridine in tRNA + 2 reduced [2Fe-2S]-[ferredoxin] + ATP + H(+) = [ThiI sulfur-carrier protein]-L-cysteine + a 4-thiouridine in tRNA + 2 oxidized [2Fe-2S]-[ferredoxin] + AMP + diphosphate. It catalyses the reaction [ThiS sulfur-carrier protein]-C-terminal Gly-Gly-AMP + S-sulfanyl-L-cysteinyl-[cysteine desulfurase] + AH2 = [ThiS sulfur-carrier protein]-C-terminal-Gly-aminoethanethioate + L-cysteinyl-[cysteine desulfurase] + A + AMP + 2 H(+). Its pathway is cofactor biosynthesis; thiamine diphosphate biosynthesis. Its function is as follows. Catalyzes the ATP-dependent transfer of a sulfur to tRNA to produce 4-thiouridine in position 8 of tRNAs, which functions as a near-UV photosensor. Also catalyzes the transfer of sulfur to the sulfur carrier protein ThiS, forming ThiS-thiocarboxylate. This is a step in the synthesis of thiazole, in the thiamine biosynthesis pathway. The sulfur is donated as persulfide by IscS. The polypeptide is tRNA sulfurtransferase (Vibrio atlanticus (strain LGP32) (Vibrio splendidus (strain Mel32))).